The following is a 566-amino-acid chain: Bicarbonate transporter BicA (566 aa).

Over 1-15 the chain is Cytoplasmic; the sequence is MQITNKIHFRNIRGD. A helical membrane pass occupies residues 16–36; that stretch reads IFGGLTAAVIALPMALAFGVA. Topologically, residues 37–42 are periplasmic; that stretch reads SGAGAE. Residues 43 to 63 form a helical membrane-spanning segment; the sequence is AGLWGAVLVGFFAALFGGTPT. A topological domain (cytoplasmic) is located at residue L64. A helical transmembrane segment spans residues 65 to 85; it reads ISEPTGPMTVVMTAVIAHFTA. T69 provides a ligand contact to hydrogencarbonate. The Periplasmic segment spans residues 86–93; the sequence is SAATPEEG. A helical membrane pass occupies residues 94–114; the sequence is LAIAFTVVMMAGVFQIIFGSL. Topologically, residues 115 to 126 are cytoplasmic; sequence KLGKYVTMMPYT. The helical transmembrane segment at 127-147 threads the bilayer; sequence VISGFMSGIGIILVILQLAPF. The Periplasmic portion of the chain corresponds to 148 to 169; that stretch reads LGQASPGGGVIGTLQNLPTLLS. The chain crosses the membrane as a helical span at residues 170 to 190; that stretch reads NIQPGETALALGTVAIIWFMP. Residues 191 to 196 are Cytoplasmic-facing; that stretch reads EKFKKV. A helical membrane pass occupies residues 197-217; the sequence is IPPQLVALVLGTVIAFFVFPP. Over 218–247 the chain is Periplasmic; sequence EVSDLRRIGEIRAGFPELVRPSFSPVEFQR. Residues 248-268 traverse the membrane as a helical segment; sequence MILDAAVLGMLGCIDALLTSV. Residues D262, T266, and G304 each coordinate Na(+). Residues 269 to 318 are Cytoplasmic-facing; the sequence is VADSLTRTEHNSNKELIGQGLGNLFSGLFGGIAGAGATMGTVVNIQSGGR. A305 provides a ligand contact to hydrogencarbonate. T306 serves as a coordination point for Na(+). The chain crosses the membrane as a helical span at residues 319–339; sequence TALSGLVRAFVLLVVILGAAS. L340 is a topological domain (periplasmic). A helical transmembrane segment spans residues 341–361; it reads TATIPLAVLAGIAFKVGVDII. Over 362-371 the chain is Cytoplasmic; the sequence is DWSFLKRAHE. A helical transmembrane segment spans residues 372–392; sequence ISPKGALIMYGVILLTVLVDL. Position 393 (I393) is a topological domain, periplasmic. Residues 394-414 traverse the membrane as a helical segment; sequence VAVGVGVFVANVLTIERMSNL. Residues 415 to 566 are Cytoplasmic-facing; that stretch reads QSEKVQTVSD…GVTAPSSEMG (152 aa). The STAS domain occupies 436–546; the sequence is KRWLDEGQGR…MSREEALKNA (111 aa).

The protein belongs to the SLC26A/SulP transporter (TC 2.A.53) family.

It is found in the cell inner membrane. Low/medium affinity, Na(+)-dependent bicarbonate transporter. This is Bicarbonate transporter BicA (bicA) from Picosynechococcus sp. (strain ATCC 27264 / PCC 7002 / PR-6) (Agmenellum quadruplicatum).